A 93-amino-acid polypeptide reads, in one-letter code: UPF0250 protein PA3998 (93 aa).

This sequence belongs to the UPF0250 family.

The polypeptide is UPF0250 protein PA3998 (Pseudomonas aeruginosa (strain ATCC 15692 / DSM 22644 / CIP 104116 / JCM 14847 / LMG 12228 / 1C / PRS 101 / PAO1)).